The following is a 225-amino-acid chain: Pathogenesis-related 5 protein Jun a 3.0101 (225 aa).

Positions 1–26 (MARVSELAFLLAATLAISLHMQEAGV) are cleaved as a signal peptide. 8 disulfides stabilise this stretch: C35-C224, C76-C86, C91-C97, C139-C213, C144-C197, C152-C162, C166-C175, and C176-C184. IgE-binding stretches follow at residues 146 to 157 (ADINAVCPSELK), 158 to 170 (VDGG…NVFK), and 178 to 191 (NAYV…NYSK).

It belongs to the thaumatin family. As to expression, expressed in pollen (at protein level).

This is Pathogenesis-related 5 protein Jun a 3.0101 from Juniperus ashei (Ozark white cedar).